We begin with the raw amino-acid sequence, 81 residues long: Translational regulator CsrA (81 aa).

The protein belongs to the CsrA/RsmA family. Homodimer; the beta-strands of each monomer intercalate to form a hydrophobic core, while the alpha-helices form wings that extend away from the core.

The protein localises to the cytoplasm. A translational regulator that binds mRNA to regulate translation initiation and/or mRNA stability. Usually binds in the 5'-UTR at or near the Shine-Dalgarno sequence preventing ribosome-binding, thus repressing translation. Its main target seems to be the major flagellin gene, while its function is anatagonized by FliW. The sequence is that of Translational regulator CsrA from Halothermothrix orenii (strain H 168 / OCM 544 / DSM 9562).